The sequence spans 123 residues: Ribosome-binding factor A (123 aa).

The protein belongs to the RbfA family. As to quaternary structure, monomer. Binds 30S ribosomal subunits, but not 50S ribosomal subunits or 70S ribosomes.

The protein resides in the cytoplasm. In terms of biological role, one of several proteins that assist in the late maturation steps of the functional core of the 30S ribosomal subunit. Associates with free 30S ribosomal subunits (but not with 30S subunits that are part of 70S ribosomes or polysomes). Required for efficient processing of 16S rRNA. May interact with the 5'-terminal helix region of 16S rRNA. The sequence is that of Ribosome-binding factor A from Trichlorobacter lovleyi (strain ATCC BAA-1151 / DSM 17278 / SZ) (Geobacter lovleyi).